Reading from the N-terminus, the 306-residue chain is Ribosomal protein L11 methyltransferase (306 aa).

4 residues coordinate S-adenosyl-L-methionine: Thr139, Gly173, Asp195, and Asn242.

The protein belongs to the methyltransferase superfamily. PrmA family.

Its subcellular location is the cytoplasm. The enzyme catalyses L-lysyl-[protein] + 3 S-adenosyl-L-methionine = N(6),N(6),N(6)-trimethyl-L-lysyl-[protein] + 3 S-adenosyl-L-homocysteine + 3 H(+). Functionally, methylates ribosomal protein L11. In Trichormus variabilis (strain ATCC 29413 / PCC 7937) (Anabaena variabilis), this protein is Ribosomal protein L11 methyltransferase.